Here is a 470-residue protein sequence, read N- to C-terminus: Siroheme synthase (470 aa).

The segment at 1–201 (MDYFPIFCQL…NDHVQADQHV (201 aa)) is precorrin-2 dehydrogenase /sirohydrochlorin ferrochelatase. NAD(+)-binding positions include 22 to 23 (EI) and 43 to 44 (CE). Residue Ser-128 is modified to Phosphoserine. The tract at residues 213-470 (GEVVLVGAGP…KVTECVAHVG (258 aa)) is uroporphyrinogen-III C-methyltransferase. Pro-222 provides a ligand contact to S-adenosyl-L-methionine. Asp-245 acts as the Proton acceptor in catalysis. Catalysis depends on Lys-267, which acts as the Proton donor. S-adenosyl-L-methionine-binding positions include 298–300 (GGD), Ile-303, 328–329 (TA), Met-379, and Gly-408.

In the N-terminal section; belongs to the precorrin-2 dehydrogenase / sirohydrochlorin ferrochelatase family. It in the C-terminal section; belongs to the precorrin methyltransferase family.

The catalysed reaction is uroporphyrinogen III + 2 S-adenosyl-L-methionine = precorrin-2 + 2 S-adenosyl-L-homocysteine + H(+). It catalyses the reaction precorrin-2 + NAD(+) = sirohydrochlorin + NADH + 2 H(+). It carries out the reaction siroheme + 2 H(+) = sirohydrochlorin + Fe(2+). Its pathway is cofactor biosynthesis; adenosylcobalamin biosynthesis; precorrin-2 from uroporphyrinogen III: step 1/1. The protein operates within cofactor biosynthesis; adenosylcobalamin biosynthesis; sirohydrochlorin from precorrin-2: step 1/1. It participates in porphyrin-containing compound metabolism; siroheme biosynthesis; precorrin-2 from uroporphyrinogen III: step 1/1. It functions in the pathway porphyrin-containing compound metabolism; siroheme biosynthesis; siroheme from sirohydrochlorin: step 1/1. Its pathway is porphyrin-containing compound metabolism; siroheme biosynthesis; sirohydrochlorin from precorrin-2: step 1/1. In terms of biological role, multifunctional enzyme that catalyzes the SAM-dependent methylations of uroporphyrinogen III at position C-2 and C-7 to form precorrin-2 via precorrin-1. Then it catalyzes the NAD-dependent ring dehydrogenation of precorrin-2 to yield sirohydrochlorin. Finally, it catalyzes the ferrochelation of sirohydrochlorin to yield siroheme. This chain is Siroheme synthase, found in Yersinia pestis.